We begin with the raw amino-acid sequence, 843 residues long: Protein P (843 aa).

Residues 1 to 177 (MPLSYQHFRK…FCGSPYSWEQ (177 aa)) form a terminal protein domain (TP) region. The interval 178-346 (ELQHGRLVFQ…YCLTHIVNLL (169 aa)) is spacer. Disordered regions lie at residues 220 to 273 (QSRL…SSTS) and 289 to 316 (LSTS…RSQS). The segment covering 289 to 299 (LSTSKRQSSSG) has biased composition (polar residues). Positions 347–690 (EDWGPCTEHG…YLNLYPVARQ (344 aa)) are polymerase/reverse transcriptase domain (RT). The Reverse transcriptase domain maps to 357-600 (EHNIRIPRTP…YSLNFMGYVI (244 aa)). Mg(2+)-binding residues include D429, D551, and D552.

Belongs to the hepadnaviridae P protein family.

The catalysed reaction is DNA(n) + a 2'-deoxyribonucleoside 5'-triphosphate = DNA(n+1) + diphosphate. The enzyme catalyses Endonucleolytic cleavage to 5'-phosphomonoester.. With respect to regulation, activated by host HSP70 and HSP40 in vitro to be able to bind the epsilon loop of the pgRNA. Because deletion of the RNase H region renders the protein partly chaperone-independent, the chaperones may be needed indirectly to relieve occlusion of the RNA-binding site by this domain. Inhibited by several reverse-transcriptase inhibitors: Lamivudine, Adefovir and Entecavir. Multifunctional enzyme that converts the viral RNA genome into dsDNA in viral cytoplasmic capsids. This enzyme displays a DNA polymerase activity that can copy either DNA or RNA templates, and a ribonuclease H (RNase H) activity that cleaves the RNA strand of RNA-DNA heteroduplexes in a partially processive 3'- to 5'-endonucleasic mode. Neo-synthesized pregenomic RNA (pgRNA) are encapsidated together with the P protein, and reverse-transcribed inside the nucleocapsid. Initiation of reverse-transcription occurs first by binding the epsilon loop on the pgRNA genome, and is initiated by protein priming, thereby the 5'-end of (-)DNA is covalently linked to P protein. Partial (+)DNA is synthesized from the (-)DNA template and generates the relaxed circular DNA (RC-DNA) genome. After budding and infection, the RC-DNA migrates in the nucleus, and is converted into a plasmid-like covalently closed circular DNA (cccDNA). The activity of P protein does not seem to be necessary for cccDNA generation, and is presumably released from (+)DNA by host nuclear DNA repair machinery. The chain is Protein P from Hepatitis B virus genotype C subtype ad (isolate Japan/S-179/1988) (HBV-C).